A 236-amino-acid chain; its full sequence is Enolase-phosphatase E1 (236 aa).

This sequence belongs to the HAD-like hydrolase superfamily. MasA/MtnC family. Monomer. The cofactor is Mg(2+).

It carries out the reaction 5-methylsulfanyl-2,3-dioxopentyl phosphate + H2O = 1,2-dihydroxy-5-(methylsulfanyl)pent-1-en-3-one + phosphate. It participates in amino-acid biosynthesis; L-methionine biosynthesis via salvage pathway; L-methionine from S-methyl-5-thio-alpha-D-ribose 1-phosphate: step 3/6. It functions in the pathway amino-acid biosynthesis; L-methionine biosynthesis via salvage pathway; L-methionine from S-methyl-5-thio-alpha-D-ribose 1-phosphate: step 4/6. In terms of biological role, bifunctional enzyme that catalyzes the enolization of 2,3-diketo-5-methylthiopentyl-1-phosphate (DK-MTP-1-P) into the intermediate 2-hydroxy-3-keto-5-methylthiopentenyl-1-phosphate (HK-MTPenyl-1-P), which is then dephosphorylated to form the acireductone 1,2-dihydroxy-3-keto-5-methylthiopentene (DHK-MTPene). The polypeptide is Enolase-phosphatase E1 (Frankia alni (strain DSM 45986 / CECT 9034 / ACN14a)).